Reading from the N-terminus, the 101-residue chain is ATP-dependent Clp protease adapter protein ClpS (101 aa).

The segment at 1–24 (MVVASAPAKPGSVGQQESASRDAT) is disordered. The segment covering 13 to 23 (VGQQESASRDA) has biased composition (polar residues).

It belongs to the ClpS family. Binds to the N-terminal domain of the chaperone ClpA.

Involved in the modulation of the specificity of the ClpAP-mediated ATP-dependent protein degradation. The polypeptide is ATP-dependent Clp protease adapter protein ClpS (Mycobacterium marinum (strain ATCC BAA-535 / M)).